Consider the following 423-residue polypeptide: Protein MANNAN SYNTHESIS-RELATED 2 (423 aa).

Residues 1-6 are Cytoplasmic-facing; sequence MGVDLR. A helical; Signal-anchor for type II membrane protein transmembrane segment spans residues 7–26; it reads QVVAGILTITMFVMLGQMLH. The Lumenal segment spans residues 27-423; the sequence is RDYFDAVQEK…KNHLAYSCFC (397 aa). 264 to 266 provides a ligand contact to substrate; sequence DLR.

It belongs to the glycosyltransferase GT106 family. Widely expressed.

It is found in the golgi apparatus membrane. It participates in glycan biosynthesis. Glycosyltransferase involved in mannan biosynthesis. The polypeptide is Protein MANNAN SYNTHESIS-RELATED 2 (Arabidopsis thaliana (Mouse-ear cress)).